The sequence spans 215 residues: Protein-L-isoaspartate O-methyltransferase (215 aa).

Serine 62 is an active-site residue.

This sequence belongs to the methyltransferase superfamily. L-isoaspartyl/D-aspartyl protein methyltransferase family.

It localises to the cytoplasm. It catalyses the reaction [protein]-L-isoaspartate + S-adenosyl-L-methionine = [protein]-L-isoaspartate alpha-methyl ester + S-adenosyl-L-homocysteine. In terms of biological role, catalyzes the methyl esterification of L-isoaspartyl residues in peptides and proteins that result from spontaneous decomposition of normal L-aspartyl and L-asparaginyl residues. It plays a role in the repair and/or degradation of damaged proteins. In Bradyrhizobium sp. (strain ORS 278), this protein is Protein-L-isoaspartate O-methyltransferase.